The chain runs to 1483 residues: Heme-responsive zinc finger transcription factor HAP1 (1483 aa).

Positions 1-50 (MSNTPYNSSVPSIASMTQSSVSRSPNMHTATTPGANTSSNSPPLHMSSDS) are enriched in polar residues. Residues 1 to 56 (MSNTPYNSSVPSIASMTQSSVSRSPNMHTATTPGANTSSNSPPLHMSSDSSKIKRK) are disordered. Zn(2+) is bound by residues cysteine 64, cysteine 67, cysteine 74, cysteine 81, cysteine 84, and cysteine 93. Residues 64-93 (CTICRKRKVKCDKLRPHCQQCTKTGVAHLC) constitute a DNA-binding region (zn(2)-C6 fungal-type). A coiled-coil region spans residues 105–134 (EKELLKDNELKKLRERVKSLEKTLSKVHSS). A disordered region spans residues 126–208 (KTLSKVHSSP…ANSSSLSISN (83 aa)). Over residues 130–142 (KVHSSPSSNSLKS) the composition is skewed to low complexity. Polar residues-rich tracts occupy residues 143–152 (YNTPESSNLF) and 160–176 (TLVN…SHMH). Residues 177–208 (QQQQQQQQQEQQQDFSRSANANANSSSLSISN) are compositionally biased toward low complexity. The interval 244–444 (KGDPYLKLLW…NTIPHHQPQS (201 aa)) is heme-responsive; required for HMC formation. 6 HRM repeats span residues 280-285 (KCPINH), 299-304 (KCPVDH), 323-328 (KCPVDH), 347-352 (RCPVDH), 389-394 (KCPVDH), and 415-420 (RCPIDH). Polar residues-rich tracts occupy residues 432-447 (STHN…SGSH) and 706-734 (QLNA…NPTL). Disordered stretches follow at residues 432-458 (STHN…SRKH) and 706-767 (QLNA…KENQ). Low complexity predominate over residues 735 to 759 (NNNMSAATTNSSSRSGSADSRSGSN). An HRM 7 repeat occupies 1192-1197 (KCPVYQ). The interval 1384 to 1411 (TANTDTSANGSALSTLTSPQGSDLASNS) is disordered. Residues 1388 to 1411 (DTSANGSALSTLTSPQGSDLASNS) show a composition bias toward polar residues.

In terms of assembly, binds DNA as a homodimer. Interacts with SRO9 and YDJ1. In the absence of heme, binds to at least four cellular proteins, including YDJ1 and SRO9, forming a high-molecular-weight complex (HMC) which results in repression of its activity and dictates its DNA-binding specificity.

The protein localises to the nucleus. Functionally, regulation of oxygen dependent gene expression. It modulates the expression of Iso-1 (CYP1) and Iso-2 (CYP3) cytochrome c. In response to heme, promotes transcription of genes encoding functions required for respiration, controlling oxidative damage and repression of anaerobic genes. Binds to the sequence 5'-CGGNNNTNNCGG-3'. Is non-functional in terms of iso-1 cytochrome c expression in strain S288c and its derivatives. This is Heme-responsive zinc finger transcription factor HAP1 (HAP1) from Saccharomyces cerevisiae (Baker's yeast).